The chain runs to 341 residues: Outer membrane protein assembly factor BamD (341 aa).

Residues M1–A17 form the signal peptide. A lipid anchor (N-palmitoyl cysteine) is attached at C18. The S-diacylglycerol cysteine moiety is linked to residue C18. Over residues D289–D316 the composition is skewed to basic and acidic residues. Residues D289–S330 are disordered. Residues E317–D326 are compositionally biased toward acidic residues.

The protein belongs to the BamD family. Part of the Bam complex.

The protein localises to the cell outer membrane. Functionally, part of the outer membrane protein assembly complex, which is involved in assembly and insertion of beta-barrel proteins into the outer membrane. In Pseudomonas aeruginosa (strain ATCC 15692 / DSM 22644 / CIP 104116 / JCM 14847 / LMG 12228 / 1C / PRS 101 / PAO1), this protein is Outer membrane protein assembly factor BamD.